We begin with the raw amino-acid sequence, 183 residues long: Tail fiber assembly protein (183 aa).

This sequence belongs to the tfa family.

In terms of biological role, chaperone involved, together with gp57, in the assembly of the distal-half tail fiber of T4. It is necessary for the maturation of protein gp37 to the dimeric structural subunit P37. In Escherichia coli (Bacteriophage T4), this protein is Tail fiber assembly protein (38).